Reading from the N-terminus, the 434-residue chain is Histidinol dehydrogenase (434 aa).

3 residues coordinate NAD(+): Tyr130, Gln191, and Asn214. Residues Ser237, Gln259, and His262 each contribute to the substrate site. Residues Gln259 and His262 each contribute to the Zn(2+) site. Catalysis depends on proton acceptor residues Glu327 and His328. Substrate-binding residues include His328, Asp361, Glu415, and His420. Asp361 provides a ligand contact to Zn(2+). His420 serves as a coordination point for Zn(2+).

This sequence belongs to the histidinol dehydrogenase family. It depends on Zn(2+) as a cofactor.

It carries out the reaction L-histidinol + 2 NAD(+) + H2O = L-histidine + 2 NADH + 3 H(+). It functions in the pathway amino-acid biosynthesis; L-histidine biosynthesis; L-histidine from 5-phospho-alpha-D-ribose 1-diphosphate: step 9/9. In terms of biological role, catalyzes the sequential NAD-dependent oxidations of L-histidinol to L-histidinaldehyde and then to L-histidine. The protein is Histidinol dehydrogenase of Cereibacter sphaeroides (strain ATCC 17023 / DSM 158 / JCM 6121 / CCUG 31486 / LMG 2827 / NBRC 12203 / NCIMB 8253 / ATH 2.4.1.) (Rhodobacter sphaeroides).